Here is a 205-residue protein sequence, read N- to C-terminus: Holliday junction branch migration complex subunit RuvA (205 aa).

The tract at residues 1–65 (MIAKLKGILD…EDRIHLFGFL (65 aa)) is domain I. The domain II stretch occupies residues 66–144 (DNTEKVAFNM…NINTIANNTS (79 aa)). Positions 145 to 153 (LATLSTDSN) are flexible linker. The tract at residues 154 to 205 (THDNILSDAITALIALGISRAEATQILSDIYALSPSISVNELVRTALQRRAK) is domain III.

The protein belongs to the RuvA family. As to quaternary structure, homotetramer. Forms an RuvA(8)-RuvB(12)-Holliday junction (HJ) complex. HJ DNA is sandwiched between 2 RuvA tetramers; dsDNA enters through RuvA and exits via RuvB. An RuvB hexamer assembles on each DNA strand where it exits the tetramer. Each RuvB hexamer is contacted by two RuvA subunits (via domain III) on 2 adjacent RuvB subunits; this complex drives branch migration. In the full resolvosome a probable DNA-RuvA(4)-RuvB(12)-RuvC(2) complex forms which resolves the HJ.

The protein localises to the cytoplasm. Its function is as follows. The RuvA-RuvB-RuvC complex processes Holliday junction (HJ) DNA during genetic recombination and DNA repair, while the RuvA-RuvB complex plays an important role in the rescue of blocked DNA replication forks via replication fork reversal (RFR). RuvA specifically binds to HJ cruciform DNA, conferring on it an open structure. The RuvB hexamer acts as an ATP-dependent pump, pulling dsDNA into and through the RuvAB complex. HJ branch migration allows RuvC to scan DNA until it finds its consensus sequence, where it cleaves and resolves the cruciform DNA. This Orientia tsutsugamushi (strain Ikeda) (Rickettsia tsutsugamushi) protein is Holliday junction branch migration complex subunit RuvA.